Reading from the N-terminus, the 355-residue chain is MNSLKNDRYLRALLRQPVDVTPVWMMRQAGRYLPEYKATRAQAGDFMSLCKNAELACEVTLQPLRRFDLDAAILFSDILTIPDAMGLGLYFEQGEGPKFSKPITSMADIQNLPAPDPEQELQYVMNAVRTIRKNLQGEVPLIGFSGSPWTLATYMIEGGSSKAFTKIKKMAFSDPQALHLLLDKLADSVILYLNAQIDAGAQSVMVFDTWGGVLSPRDYQDFSLQYMHKIVDGLTRENDGRKVPVTLFTKNAGMWLESIAATGCDGVGLDWTIDIDNAKARVGDKVALQGNMDPSMLYAAPERIEQEVQKILAGFGEGPGHVFNLGHGIHLDVPPENAKVFVDAVHKYSAQYHKG.

Substrate contacts are provided by residues 27-31 (RQAGR), Asp-77, Tyr-154, Thr-209, and His-327.

Belongs to the uroporphyrinogen decarboxylase family. In terms of assembly, homodimer.

Its subcellular location is the cytoplasm. The catalysed reaction is uroporphyrinogen III + 4 H(+) = coproporphyrinogen III + 4 CO2. Its pathway is porphyrin-containing compound metabolism; protoporphyrin-IX biosynthesis; coproporphyrinogen-III from 5-aminolevulinate: step 4/4. Functionally, catalyzes the decarboxylation of four acetate groups of uroporphyrinogen-III to yield coproporphyrinogen-III. The sequence is that of Uroporphyrinogen decarboxylase from Pseudoalteromonas atlantica (strain T6c / ATCC BAA-1087).